The following is a 382-amino-acid chain: Galactokinase (382 aa).

34–37 contributes to the substrate binding site; that stretch reads EHTD. 124–130 lines the ATP pocket; it reads GAGLSSS. Residues S130 and E162 each contribute to the Mg(2+) site. The Proton acceptor role is filled by D174. Residue Y223 participates in substrate binding.

The protein belongs to the GHMP kinase family. GalK subfamily.

It localises to the cytoplasm. It carries out the reaction alpha-D-galactose + ATP = alpha-D-galactose 1-phosphate + ADP + H(+). Its pathway is carbohydrate metabolism; galactose metabolism. Functionally, catalyzes the transfer of the gamma-phosphate of ATP to D-galactose to form alpha-D-galactose-1-phosphate (Gal-1-P). The sequence is that of Galactokinase from Salmonella arizonae (strain ATCC BAA-731 / CDC346-86 / RSK2980).